The primary structure comprises 57 residues: uncharacterized protein (57 aa).

This is an uncharacterized protein from Halorubrum sp. PV6 (HRPV-1).